The primary structure comprises 201 residues: Small ribosomal subunit protein uS4c (201 aa).

Residues 15–43 (LGALPGLTRKTPKSGSNQKKKFHSGKKEQ) form a disordered region. An S4 RNA-binding domain is found at 89 to 150 (MRLDNILFRL…NQRSKRLVQN (62 aa)).

The protein belongs to the universal ribosomal protein uS4 family. Part of the 30S ribosomal subunit. Contacts protein S5. The interaction surface between S4 and S5 is involved in control of translational fidelity.

It localises to the plastid. It is found in the chloroplast. Its function is as follows. One of the primary rRNA binding proteins, it binds directly to 16S rRNA where it nucleates assembly of the body of the 30S subunit. With S5 and S12 plays an important role in translational accuracy. The protein is Small ribosomal subunit protein uS4c (rps4) of Sorghum bicolor (Sorghum).